A 488-amino-acid polypeptide reads, in one-letter code: Proline--tRNA ligase (488 aa).

This sequence belongs to the class-II aminoacyl-tRNA synthetase family. ProS type 3 subfamily. As to quaternary structure, homodimer.

Its subcellular location is the cytoplasm. It carries out the reaction tRNA(Pro) + L-proline + ATP = L-prolyl-tRNA(Pro) + AMP + diphosphate. Catalyzes the attachment of proline to tRNA(Pro) in a two-step reaction: proline is first activated by ATP to form Pro-AMP and then transferred to the acceptor end of tRNA(Pro). The polypeptide is Proline--tRNA ligase (Symbiobacterium thermophilum (strain DSM 24528 / JCM 14929 / IAM 14863 / T)).